The chain runs to 403 residues: CCA-adding enzyme (403 aa).

The ATP site is built by glycine 32 and arginine 35. CTP-binding residues include glycine 32 and arginine 35. The Mg(2+) site is built by aspartate 45 and aspartate 47. 5 residues coordinate ATP: arginine 116, aspartate 159, arginine 162, arginine 165, and arginine 168. Residues arginine 116, aspartate 159, arginine 162, arginine 165, and arginine 168 each coordinate CTP.

It belongs to the tRNA nucleotidyltransferase/poly(A) polymerase family. Bacterial CCA-adding enzyme type 3 subfamily. As to quaternary structure, homodimer. The cofactor is Mg(2+).

It catalyses the reaction a tRNA precursor + 2 CTP + ATP = a tRNA with a 3' CCA end + 3 diphosphate. It carries out the reaction a tRNA with a 3' CCA end + 2 CTP + ATP = a tRNA with a 3' CCACCA end + 3 diphosphate. Its function is as follows. Catalyzes the addition and repair of the essential 3'-terminal CCA sequence in tRNAs without using a nucleic acid template. Adds these three nucleotides in the order of C, C, and A to the tRNA nucleotide-73, using CTP and ATP as substrates and producing inorganic pyrophosphate. tRNA 3'-terminal CCA addition is required both for tRNA processing and repair. Also involved in tRNA surveillance by mediating tandem CCA addition to generate a CCACCA at the 3' terminus of unstable tRNAs. While stable tRNAs receive only 3'-terminal CCA, unstable tRNAs are marked with CCACCA and rapidly degraded. In Leuconostoc citreum (strain KM20), this protein is CCA-adding enzyme.